A 201-amino-acid polypeptide reads, in one-letter code: MQVVLLERVEKLGQMGDVVKVKDGFARNFLLPRKKALRATKANIERFEGQRAQLEARNLELKKEAEQVHTKVHGQSFIILRQAGETGILYGSVSTRDIATAMTDGGFTAARNQVVLDKPIKTIGLHDVRIVLHPEVSATIAINVARTQEEAERQAAGEDLTQRRDDEEEEAVEAAEFFESEELAPGDEEEEAAGEEEDAKE.

Over residues 150 to 165 (EAERQAAGEDLTQRRD) the composition is skewed to basic and acidic residues. The interval 150 to 201 (EAERQAAGEDLTQRRDDEEEEAVEAAEFFESEELAPGDEEEEAAGEEEDAKE) is disordered. The segment covering 166–201 (DEEEEAVEAAEFFESEELAPGDEEEEAAGEEEDAKE) has biased composition (acidic residues).

Belongs to the bacterial ribosomal protein bL9 family.

Binds to the 23S rRNA. This Parvibaculum lavamentivorans (strain DS-1 / DSM 13023 / NCIMB 13966) protein is Large ribosomal subunit protein bL9.